The following is a 245-amino-acid chain: MGKRDNRVAYMNPIAMARSRGPIQSSGPTIQDYLNRPRPTWEEVKEQLEKKKKGSKALAEFEEKMNENWKKELEKHREKLLSGNESSSKKRQKKKKEKKKSGRYSSSSSSSSDSSSSSSDSEEEDKKQTKRRKKKKSHCHKSPETSVSDSDSDSKDGSKKKKKSKDITEREKDTKGLSKKRKMYEDKPLSSESLSESDCGEVQAKKKKSGEERERTTDKAKKRRKHKKHSKKKKKKAASSSSDSP.

2 disordered regions span residues 19–38 and 69–245; these read SRGP…NRPR and WKKE…SDSP. Positions 69 to 80 are enriched in basic and acidic residues; sequence WKKELEKHREKL. Residue serine 82 is modified to Phosphoserine. Over residues 89-102 the composition is skewed to basic residues; that stretch reads KKRQKKKKEKKKSG. Over residues 103 to 119 the composition is skewed to low complexity; that stretch reads RYSSSSSSSSDSSSSSS. Basic residues predominate over residues 128–140; that stretch reads QTKRRKKKKSHCH. Positions 165–176 are enriched in basic and acidic residues; that stretch reads KDITEREKDTKG. 4 positions are modified to phosphoserine: serine 190, serine 191, serine 193, and serine 195. Positions 209–219 are enriched in basic and acidic residues; sequence SGEERERTTDK. Residues 220–237 show a composition bias toward basic residues; it reads AKKRRKHKKHSKKKKKKA.

It belongs to the FAM133 family.

This chain is Protein FAM133B (Fam133b), found in Rattus norvegicus (Rat).